Reading from the N-terminus, the 407-residue chain is 4-hydroxy-3-methylbut-2-en-1-yl diphosphate synthase (ferredoxin) (407 aa).

[4Fe-4S] cluster contacts are provided by C316, C319, C350, and E357.

Belongs to the IspG family. Requires [4Fe-4S] cluster as cofactor.

It catalyses the reaction (2E)-4-hydroxy-3-methylbut-2-enyl diphosphate + 2 oxidized [2Fe-2S]-[ferredoxin] + H2O = 2-C-methyl-D-erythritol 2,4-cyclic diphosphate + 2 reduced [2Fe-2S]-[ferredoxin] + H(+). It functions in the pathway isoprenoid biosynthesis; isopentenyl diphosphate biosynthesis via DXP pathway; isopentenyl diphosphate from 1-deoxy-D-xylulose 5-phosphate: step 5/6. Functionally, converts 2C-methyl-D-erythritol 2,4-cyclodiphosphate (ME-2,4cPP) into 1-hydroxy-2-methyl-2-(E)-butenyl 4-diphosphate. The polypeptide is 4-hydroxy-3-methylbut-2-en-1-yl diphosphate synthase (ferredoxin) (Prochlorococcus marinus (strain SARG / CCMP1375 / SS120)).